Reading from the N-terminus, the 323-residue chain is L-lactate dehydrogenase 1 (323 aa).

NAD(+) contacts are provided by residues valine 17, aspartate 38, arginine 43, tyrosine 68, and 82 to 83 (GA). Substrate is bound by residues glutamine 85 and arginine 91. NAD(+) contacts are provided by residues serine 104, 121–123 (AAN), and serine 146. 123–126 (NPVD) is a binding site for substrate. 151 to 154 (DTGR) serves as a coordination point for substrate. Histidine 178 acts as the Proton acceptor in catalysis. Position 223 is a phosphotyrosine (tyrosine 223). A substrate-binding site is contributed by threonine 232.

The protein belongs to the LDH/MDH superfamily. LDH family. Homotetramer.

Its subcellular location is the cytoplasm. It catalyses the reaction (S)-lactate + NAD(+) = pyruvate + NADH + H(+). It functions in the pathway fermentation; pyruvate fermentation to lactate; (S)-lactate from pyruvate: step 1/1. Functionally, catalyzes the conversion of lactate to pyruvate. This chain is L-lactate dehydrogenase 1, found in Lactobacillus johnsonii (strain CNCM I-12250 / La1 / NCC 533).